Reading from the N-terminus, the 665-residue chain is Methionine--tRNA ligase (665 aa).

The 'HIGH' region signature appears at 13-23 (YYPSGKLHIGS). A 'KMSKS' region motif is present at residues 309–313 (KMSKS). An ATP-binding site is contributed by lysine 312. Residues 562–665 (DFDKVEIRVA…PAVPNGSVIG (104 aa)) enclose the tRNA-binding domain.

Belongs to the class-I aminoacyl-tRNA synthetase family. MetG type 2B subfamily. As to quaternary structure, homodimer.

It localises to the cytoplasm. It carries out the reaction tRNA(Met) + L-methionine + ATP = L-methionyl-tRNA(Met) + AMP + diphosphate. Functionally, is required not only for elongation of protein synthesis but also for the initiation of all mRNA translation through initiator tRNA(fMet) aminoacylation. The protein is Methionine--tRNA ligase (metG) of Streptococcus pneumoniae serotype 4 (strain ATCC BAA-334 / TIGR4).